The primary structure comprises 570 residues: Urease subunit alpha (570 aa).

Positions 131-570 (GGFDAHIHFI…LPMAQRYFLF (440 aa)) constitute a Urease domain. Residues H136, H138, and K219 each coordinate Ni(2+). K219 bears the N6-carboxylysine mark. A substrate-binding site is contributed by H221. Residues H248 and H274 each contribute to the Ni(2+) site. Catalysis depends on H322, which acts as the Proton donor. D362 serves as a coordination point for Ni(2+).

It belongs to the metallo-dependent hydrolases superfamily. Urease alpha subunit family. Heterotrimer of UreA (gamma), UreB (beta) and UreC (alpha) subunits. Three heterotrimers associate to form the active enzyme. It depends on Ni cation as a cofactor. In terms of processing, carboxylation allows a single lysine to coordinate two nickel ions.

The protein localises to the cytoplasm. It carries out the reaction urea + 2 H2O + H(+) = hydrogencarbonate + 2 NH4(+). Its pathway is nitrogen metabolism; urea degradation; CO(2) and NH(3) from urea (urease route): step 1/1. This Chelativorans sp. (strain BNC1) protein is Urease subunit alpha.